Reading from the N-terminus, the 472-residue chain is Adenosylhomocysteinase (472 aa).

Residues threonine 60, aspartate 136, and glutamate 197 each coordinate substrate. 198–200 is a binding site for NAD(+); it reads TTT. Residues lysine 227 and aspartate 231 each contribute to the substrate site. NAD(+) is bound by residues asparagine 232, 261-266, glutamate 284, asparagine 319, 340-342, and asparagine 388; these read GYGDVG and IGH.

The protein belongs to the adenosylhomocysteinase family. Requires NAD(+) as cofactor.

The protein localises to the cytoplasm. The catalysed reaction is S-adenosyl-L-homocysteine + H2O = L-homocysteine + adenosine. The protein operates within amino-acid biosynthesis; L-homocysteine biosynthesis; L-homocysteine from S-adenosyl-L-homocysteine: step 1/1. May play a key role in the regulation of the intracellular concentration of adenosylhomocysteine. The protein is Adenosylhomocysteinase of Maridesulfovibrio salexigens (strain ATCC 14822 / DSM 2638 / NCIMB 8403 / VKM B-1763) (Desulfovibrio salexigens).